A 103-amino-acid polypeptide reads, in one-letter code: Large ribosomal subunit protein bL21 (103 aa).

Belongs to the bacterial ribosomal protein bL21 family. In terms of assembly, part of the 50S ribosomal subunit. Contacts protein L20.

This protein binds to 23S rRNA in the presence of protein L20. This Methylococcus capsulatus (strain ATCC 33009 / NCIMB 11132 / Bath) protein is Large ribosomal subunit protein bL21.